The chain runs to 553 residues: MTELSIRPEEIRDALREYVDSFQATSGDREEVGRVVVTGDGIARVEGLPHTMTNELLEFSGGVLGLALNLEVGEIGCVILGDAEHIEEGQEVRRTGEILAVPVGDGFLGRVVDPLGRPIDGLGDIAAAGTRALELQAPSVVQRQPVKEPLQTGIKAIDAMTAIGRGQRQLIIGDRQTGKTTVAIDAIINQRDNWASGDPKKQVKCVYVAIGQKKTTIREVVNTLEEAGALAYTTIVAAPADQPAGFKYIAPYTGSAIGQYWMYNGQHSLVVFDDLSKQAEAYRAISLLLRRPPGREAYPGDVFYLHSRLLERCAKLSDELGGGSLTGLPIIETKANDISAYIPTNVISITDGQIFLESDLFNQGVRPAINVGTSVSRVGGSAQVKAMKSVAGRLRLDLAQYRELEAFSAFGSDLDKASRDQLARGARLVELLKQPQNKPFSVERQVVSIWAGTTGKLDDVPVEDIRRFEAEFLDFVGRTHGAIYDTIVNTGKLGDDLVSSLESAIAEFKEQFTLSSGKQLVNEAAPEALDPSAVEREEIAVHHRKPSDETAGH.

Residue 173-180 (GDRQTGKT) participates in ATP binding. Positions 527–553 (EALDPSAVEREEIAVHHRKPSDETAGH) are disordered. Basic and acidic residues predominate over residues 533–553 (AVEREEIAVHHRKPSDETAGH).

This sequence belongs to the ATPase alpha/beta chains family. F-type ATPases have 2 components, CF(1) - the catalytic core - and CF(0) - the membrane proton channel. CF(1) has five subunits: alpha(3), beta(3), gamma(1), delta(1), epsilon(1). CF(0) has three main subunits: a(1), b(2) and c(9-12). The alpha and beta chains form an alternating ring which encloses part of the gamma chain. CF(1) is attached to CF(0) by a central stalk formed by the gamma and epsilon chains, while a peripheral stalk is formed by the delta and b chains.

Its subcellular location is the cell membrane. The enzyme catalyses ATP + H2O + 4 H(+)(in) = ADP + phosphate + 5 H(+)(out). Its function is as follows. Produces ATP from ADP in the presence of a proton gradient across the membrane. The alpha chain is a regulatory subunit. The chain is ATP synthase subunit alpha from Parafrankia sp. (strain EAN1pec).